A 511-amino-acid polypeptide reads, in one-letter code: Bifunctional purine biosynthesis protein PurH (511 aa).

The MGS-like domain maps to 1–147; sequence MIQIKRALIS…KNYKHTLVLT (147 aa).

It belongs to the PurH family.

It carries out the reaction (6R)-10-formyltetrahydrofolate + 5-amino-1-(5-phospho-beta-D-ribosyl)imidazole-4-carboxamide = 5-formamido-1-(5-phospho-D-ribosyl)imidazole-4-carboxamide + (6S)-5,6,7,8-tetrahydrofolate. It catalyses the reaction IMP + H2O = 5-formamido-1-(5-phospho-D-ribosyl)imidazole-4-carboxamide. It functions in the pathway purine metabolism; IMP biosynthesis via de novo pathway; 5-formamido-1-(5-phospho-D-ribosyl)imidazole-4-carboxamide from 5-amino-1-(5-phospho-D-ribosyl)imidazole-4-carboxamide (10-formyl THF route): step 1/1. The protein operates within purine metabolism; IMP biosynthesis via de novo pathway; IMP from 5-formamido-1-(5-phospho-D-ribosyl)imidazole-4-carboxamide: step 1/1. In Leptospira borgpetersenii serovar Hardjo-bovis (strain JB197), this protein is Bifunctional purine biosynthesis protein PurH.